A 243-amino-acid chain; its full sequence is Ribosomal RNA small subunit methyltransferase G (243 aa).

S-adenosyl-L-methionine is bound by residues Gly97, Leu102, 148–149 (VE), and Arg161.

This sequence belongs to the methyltransferase superfamily. RNA methyltransferase RsmG family.

It is found in the cytoplasm. It carries out the reaction guanosine(527) in 16S rRNA + S-adenosyl-L-methionine = N(7)-methylguanosine(527) in 16S rRNA + S-adenosyl-L-homocysteine. Specifically methylates the N7 position of guanine in position 527 of 16S rRNA. The protein is Ribosomal RNA small subunit methyltransferase G of Paracidovorax citrulli (strain AAC00-1) (Acidovorax citrulli).